A 30-amino-acid chain; its full sequence is Cysteine-rich venom protein hematin (30 aa).

Belongs to the CRISP family. Contains 8 disulfide bonds. Expressed by the venom gland.

Its subcellular location is the secreted. Functionally, inhibits calcium-activated potassium channels (KCa), voltage-gated potassium channel (Kv), and the calcium release channel/ryanodine receptor (RyR). The sequence is that of Cysteine-rich venom protein hematin from Hemachatus haemachatus (Rinkhals).